We begin with the raw amino-acid sequence, 266 residues long: 5'-nucleotidase SurE (266 aa).

Positions 8, 9, 40, and 98 each coordinate a divalent metal cation.

This sequence belongs to the SurE nucleotidase family. It depends on a divalent metal cation as a cofactor.

It is found in the cytoplasm. The enzyme catalyses a ribonucleoside 5'-phosphate + H2O = a ribonucleoside + phosphate. In terms of biological role, nucleotidase that shows phosphatase activity on nucleoside 5'-monophosphates. This is 5'-nucleotidase SurE from Parasynechococcus marenigrum (strain WH8102).